Reading from the N-terminus, the 765-residue chain is MKWSILLLVGCAAAIDVPRQPYAPTGSGKKRLTFNETVVKRAISPSAISVEWISTSEDGDYVYQDQDGSLKIQSIVTNHTQTLVPADKVPEDAYSYWIHPNLSSVLWATNYTKQYRHSYFADYFIQDVQSMKLRPLAPDQSGDIQYAQWTPTGDAIAFVRDNNVFVWTNASTSQITNDGGPDLFNGVPDWIYEEEILGDRFALWFSPDGAYLAFLRFNETGVPTFTVPYYMDNEEIAPPYPRELELRYPKVSQTNPTVELNLLELRTGERTPVPIDAFDAKELIIGEVAWLTGKHDVVAVKAFNRVQDRQKVVAVDVASLRSKTISERDGTDGWLDNLLSMAYIGPIGESKEEYYIDISDQSGWAHLWLFPVAGGEPIALTKGEWEVTNILSIDKPRQLVYFLSTKHHSTERHLYSVSWKTKEITPLVDDTVPAVWSASFSSQGGYYILSYRGPDVPYQDLYAINSTAPLRTITSNAAVLNALKEYTLPNITYFELALPSGETLNVMQRLPVKFSPKKKYPVLFTPYGGPGAQEVSKAWQALDFKAYIASDPELEYITWTVDNRGTGYKGRAFRCQVASRLGELEAADQVFAAQQAAKLPYVDAQHIAIWGWSYGGYLTGKVIETDSGAFSLGVQTAPVSDWRFYDSMYTERYMKTLESNAAGYNASAIRKVAGYKNVRGGVLIQHGTGDDNVHFQNAAALVDTLVGAGVTPEKLQVQWFTDSDHGIRYHGGNVFLYRQLSKRLYEEKKRKEKGEAHQWSKKSVL.

Residues 1–14 (MKWSILLLVGCAAA) form the signal peptide. N-linked (GlcNAc...) asparagine glycosylation is found at Asn-35, Asn-78, Asn-101, Asn-110, Asn-169, Asn-218, Asn-465, and Asn-490. Ser-613 functions as the Charge relay system in the catalytic mechanism. Residue Asn-665 is glycosylated (N-linked (GlcNAc...) asparagine). Catalysis depends on charge relay system residues Asp-690 and His-725.

The protein belongs to the peptidase S9B family.

The protein resides in the secreted. It carries out the reaction Release of an N-terminal dipeptide, Xaa-Yaa-|-Zaa-, from a polypeptide, preferentially when Yaa is Pro, provided Zaa is neither Pro nor hydroxyproline.. In terms of biological role, extracellular dipeptidyl-peptidase which removes N-terminal dipeptides sequentially from polypeptides having unsubstituted N-termini provided that the penultimate residue is proline. Contributes to pathogenicity. The sequence is that of Probable dipeptidyl peptidase 4 (dpp4) from Aspergillus fumigatus (strain ATCC MYA-4609 / CBS 101355 / FGSC A1100 / Af293) (Neosartorya fumigata).